A 381-amino-acid polypeptide reads, in one-letter code: MRSKKLWISLLFALTLIFTMAFSNMSAQAAGKSSTEKKYIVGFKQTMSAMSSAKKKDVISEKGGKVQKQFKYVNAAAATLDEKAVKELKKDPSVAYVEEDHIAHEYAQSVPYGISQIKAPALHSQGYTGSNVKVAVIDSGIDSSHPDLNVRGGASFVPSETNPYQDGSSHGTHVAGTIAALNNSIGVLGVSPSASLYAVKVLDSTGSGQYSWIINGIEWAISNNMDVINMSLGGPSGSTALKTVVDKAVSSGIVVAAAAGNEGSSGSSSTVGYPAKYPSTIAVGAVNSSNQRASFSSAGSELDVMAPGVSIQSTLPGGTYGAYNGTSMATPHVAGAAALILSKHPTWTNAQVRDRLESTATYLGNSFYYGKGLINVQAAAQ.

A signal peptide spans 1 to 29 (MRSKKLWISLLFALTLIFTMAFSNMSAQA). A propeptide spanning residues 30-106 (AGKSSTEKKY…VEEDHIAHEY (77 aa)) is cleaved from the precursor. Positions 38–103 (KYIVGFKQTM…VAYVEEDHIA (66 aa)) constitute an Inhibitor I9 domain. Gln108 is a Ca(2+) binding site. The 270-residue stretch at 111–380 (PYGISQIKAP…KGLINVQAAA (270 aa)) folds into the Peptidase S8 domain. The active-site Charge relay system is the Asp138. Asp147 is a Ca(2+) binding site. His170 serves as the catalytic Charge relay system. Ca(2+)-binding residues include Leu181, Asn183, Ile185, Val187, Ala275, Tyr277, and Thr280. Ser327 acts as the Charge relay system in catalysis.

It belongs to the peptidase S8 family. Ca(2+) is required as a cofactor.

Its subcellular location is the secreted. The catalysed reaction is Hydrolysis of proteins with broad specificity for peptide bonds, and a preference for a large uncharged residue in P1. Hydrolyzes peptide amides.. Subtilisin is an extracellular alkaline serine protease, it catalyzes the hydrolysis of proteins and peptide amides. This Bacillus subtilis subsp. amylosacchariticus protein is Subtilisin amylosacchariticus (apr).